The chain runs to 310 residues: Zinc finger protein-like 1 (310 aa).

A B box-type; degenerate zinc finger spans residues 1–43 (MGLCKCPKRKVTNLFCFEHRVNVCEHCLVANHAKCIVQSYLQW). At 1–266 (MGLCKCPKRK…RPLTLLQRAG (266 aa)) the chain is on the cytoplasmic side. Residues 53–101 (CRLCNIPLASRETTRLVCYDLFHWACLNERAAQLPRNTAPAGYQCPSCN) form an RING-type; degenerate zinc finger. Positions 145-231 (PEPLNTSDFS…RTPGLHGDCD (87 aa)) are disordered. Positions 148 to 165 (LNTSDFSDWSSFNASSTP) are enriched in polar residues. Residues 213–224 (KVYDTRDDDRTP) show a composition bias toward basic and acidic residues. A helical transmembrane segment spans residues 267–287 (LLLLLGLLGFLALLALMSRLG). Residues 288–310 (RAAADSDPNLDPLMNPHIRVGPS) are Lumenal-facing.

It belongs to the ZFPL1 family. As to quaternary structure, interacts with GOLGA2/GM130. Phosphorylated. Expressed strongly in the exocrine pancreas.

It is found in the golgi apparatus. It localises to the cis-Golgi network membrane. Functionally, required for cis-Golgi integrity and efficient ER to Golgi transport. Involved in the maintenance of the integrity of the cis-Golgi, possibly via its interaction with GOLGA2/GM130. This is Zinc finger protein-like 1 (ZFPL1) from Homo sapiens (Human).